We begin with the raw amino-acid sequence, 764 residues long: Polyribonucleotide nucleotidyltransferase (764 aa).

Mg(2+) is bound by residues Asp555 and Asp561. Residues 621 to 680 (PHITSINIPQNKIGEVIGPKGKTINQITEETGANITIEDDGTVFISAVGGESAREAEEKI) form the KH domain. The 70-residue stretch at 692–761 (GDRFLGTVVK…NRGKISLVLV (70 aa)) folds into the S1 motif domain.

The protein belongs to the polyribonucleotide nucleotidyltransferase family. Requires Mg(2+) as cofactor.

Its subcellular location is the cytoplasm. It catalyses the reaction RNA(n+1) + phosphate = RNA(n) + a ribonucleoside 5'-diphosphate. In terms of biological role, involved in mRNA degradation. Catalyzes the phosphorolysis of single-stranded polyribonucleotides processively in the 3'- to 5'-direction. This Corynebacterium jeikeium (strain K411) protein is Polyribonucleotide nucleotidyltransferase.